A 119-amino-acid polypeptide reads, in one-letter code: Large ribosomal subunit protein bL20 (119 aa).

It belongs to the bacterial ribosomal protein bL20 family.

Its function is as follows. Binds directly to 23S ribosomal RNA and is necessary for the in vitro assembly process of the 50S ribosomal subunit. It is not involved in the protein synthesizing functions of that subunit. In Dichelobacter nodosus (strain VCS1703A), this protein is Large ribosomal subunit protein bL20.